A 247-amino-acid chain; its full sequence is Geranylgeranylglyceryl phosphate synthase (247 aa).

The Mg(2+) site is built by Asp23 and Ser52. Residues 171–177 (YLEAGSG), 203–204 (GG), and 225–226 (GT) each bind sn-glycerol 1-phosphate.

The protein belongs to the GGGP/HepGP synthase family. Group II subfamily. Mg(2+) serves as cofactor.

The protein resides in the cytoplasm. The enzyme catalyses sn-glycerol 1-phosphate + (2E,6E,10E)-geranylgeranyl diphosphate = sn-3-O-(geranylgeranyl)glycerol 1-phosphate + diphosphate. It participates in membrane lipid metabolism; glycerophospholipid metabolism. Its function is as follows. Prenyltransferase that catalyzes the transfer of the geranylgeranyl moiety of geranylgeranyl diphosphate (GGPP) to the C3 hydroxyl of sn-glycerol-1-phosphate (G1P). This reaction is the first ether-bond-formation step in the biosynthesis of archaeal membrane lipids. In Methanosarcina barkeri (strain Fusaro / DSM 804), this protein is Geranylgeranylglyceryl phosphate synthase.